A 50-amino-acid polypeptide reads, in one-letter code: Tubulin alpha chain (50 aa).

Residue asparagine 28 participates in GTP binding. Residue glutamate 40 is part of the active site.

It belongs to the tubulin family. Dimer of alpha and beta chains. A typical microtubule is a hollow water-filled tube with an outer diameter of 25 nm and an inner diameter of 15 nM. Alpha-beta heterodimers associate head-to-tail to form protofilaments running lengthwise along the microtubule wall with the beta-tubulin subunit facing the microtubule plus end conferring a structural polarity. Microtubules usually have 13 protofilaments but different protofilament numbers can be found in some organisms and specialized cells. Requires Mg(2+) as cofactor.

It is found in the cytoplasm. The protein resides in the cytoskeleton. It catalyses the reaction GTP + H2O = GDP + phosphate + H(+). In terms of biological role, tubulin is the major constituent of microtubules, a cylinder consisting of laterally associated linear protofilaments composed of alpha- and beta-tubulin heterodimers. Microtubules grow by the addition of GTP-tubulin dimers to the microtubule end, where a stabilizing cap forms. Below the cap, tubulin dimers are in GDP-bound state, owing to GTPase activity of alpha-tubulin. The sequence is that of Tubulin alpha chain from Populus euphratica (Euphrates poplar).